Here is a 484-residue protein sequence, read N- to C-terminus: Probable cobyric acid synthase (484 aa).

Residues 247–433 (ELHIQIVKLP…LHGIFHNFAF (187 aa)) enclose the GATase cobBQ-type domain. Cys-325 acts as the Nucleophile in catalysis. His-425 is a catalytic residue.

The protein belongs to the CobB/CobQ family. CobQ subfamily.

It functions in the pathway cofactor biosynthesis; adenosylcobalamin biosynthesis. Its function is as follows. Catalyzes amidations at positions B, D, E, and G on adenosylcobyrinic A,C-diamide. NH(2) groups are provided by glutamine, and one molecule of ATP is hydrogenolyzed for each amidation. The sequence is that of Probable cobyric acid synthase from Thermococcus onnurineus (strain NA1).